A 156-amino-acid chain; its full sequence is Ribosome maturation factor RimP (156 aa).

This sequence belongs to the RimP family.

It is found in the cytoplasm. In terms of biological role, required for maturation of 30S ribosomal subunits. The polypeptide is Ribosome maturation factor RimP (Dictyoglomus turgidum (strain DSM 6724 / Z-1310)).